The chain runs to 400 residues: TBC1 domain family member 13 (400 aa).

The 311-residue stretch at 35–345 (PCEGGLRCLC…RIWDSLFADG (311 aa)) folds into the Rab-GAP TBC domain.

Interacts with RAB1A and RAB10; in a GTP-dependent manner. As to expression, expressed in adipocytes.

The protein resides in the membrane. It is found in the cytoplasm. Its function is as follows. Acts as a GTPase-activating protein for RAB35. Together with RAB35 may be involved in regulation of insulin-induced glucose transporter SLC2A4/GLUT4 translocation to the plasma membrane in adipocytes. The protein is TBC1 domain family member 13 (Tbc1d13) of Mus musculus (Mouse).